Reading from the N-terminus, the 334-residue chain is Anthranilate phosphoribosyltransferase (334 aa).

5-phospho-alpha-D-ribose 1-diphosphate-binding positions include Gly79, 82–83, Ser87, 89–92, 107–115, and Ser119; these read GD, NIST, and KHGNRSISS. Gly79 is a binding site for anthranilate. Ser91 contributes to the Mg(2+) binding site. Asn110 is an anthranilate binding site. Residue Arg165 participates in anthranilate binding. Mg(2+) is bound by residues Asp224 and Glu225.

The protein belongs to the anthranilate phosphoribosyltransferase family. As to quaternary structure, homodimer. Mg(2+) serves as cofactor.

The enzyme catalyses N-(5-phospho-beta-D-ribosyl)anthranilate + diphosphate = 5-phospho-alpha-D-ribose 1-diphosphate + anthranilate. It functions in the pathway amino-acid biosynthesis; L-tryptophan biosynthesis; L-tryptophan from chorismate: step 2/5. Its function is as follows. Catalyzes the transfer of the phosphoribosyl group of 5-phosphorylribose-1-pyrophosphate (PRPP) to anthranilate to yield N-(5'-phosphoribosyl)-anthranilate (PRA). The chain is Anthranilate phosphoribosyltransferase from Streptococcus pneumoniae serotype 19F (strain G54).